Consider the following 60-residue polypeptide: Large ribosomal subunit protein uL30 (60 aa).

It belongs to the universal ribosomal protein uL30 family. Part of the 50S ribosomal subunit.

This Carboxydothermus hydrogenoformans (strain ATCC BAA-161 / DSM 6008 / Z-2901) protein is Large ribosomal subunit protein uL30.